A 142-amino-acid chain; its full sequence is Hemoglobin subunit alpha-1 (142 aa).

In terms of domain architecture, Globin spans 2–142 (KLTAEDKHNV…VAYVLASKYR (141 aa)). Histidine 59 is an O2 binding site. Residue histidine 88 participates in heme b binding.

It belongs to the globin family. In terms of assembly, major hemoglobin is a heterotetramer of two alpha-1 chains and two beta-1 chains. In terms of tissue distribution, red blood cells.

In terms of biological role, involved in oxygen transport from the lung to the various peripheral tissues. This chain is Hemoglobin subunit alpha-1, found in Pleurodeles waltl (Iberian ribbed newt).